Reading from the N-terminus, the 238-residue chain is Ubiquinone biosynthesis O-methyltransferase (238 aa).

The S-adenosyl-L-methionine site is built by Arg-40, Gly-59, Asp-80, and Met-125.

The protein belongs to the methyltransferase superfamily. UbiG/COQ3 family.

It catalyses the reaction a 3-demethylubiquinol + S-adenosyl-L-methionine = a ubiquinol + S-adenosyl-L-homocysteine + H(+). The catalysed reaction is a 3-(all-trans-polyprenyl)benzene-1,2-diol + S-adenosyl-L-methionine = a 2-methoxy-6-(all-trans-polyprenyl)phenol + S-adenosyl-L-homocysteine + H(+). It participates in cofactor biosynthesis; ubiquinone biosynthesis. Its function is as follows. O-methyltransferase that catalyzes the 2 O-methylation steps in the ubiquinone biosynthetic pathway. This chain is Ubiquinone biosynthesis O-methyltransferase, found in Paracidovorax citrulli (strain AAC00-1) (Acidovorax citrulli).